A 231-amino-acid polypeptide reads, in one-letter code: L-ribulose-5-phosphate 4-epimerase (231 aa).

Residues 27–28 (GN), 44–45 (SG), and 74–75 (SS) contribute to the substrate site. Zn(2+)-binding residues include Asp76, His95, and His97. Asp120 functions as the Proton donor/acceptor in the catalytic mechanism. Zn(2+) is bound at residue His171. The active-site Proton donor/acceptor is Tyr229.

It belongs to the aldolase class II family. AraD/FucA subfamily. In terms of assembly, homotetramer. Zn(2+) serves as cofactor.

It catalyses the reaction L-ribulose 5-phosphate = D-xylulose 5-phosphate. It functions in the pathway carbohydrate degradation; L-arabinose degradation via L-ribulose; D-xylulose 5-phosphate from L-arabinose (bacterial route): step 3/3. In terms of biological role, involved in the degradation of L-arabinose. Catalyzes the interconversion of L-ribulose 5-phosphate (LRu5P) and D-xylulose 5-phosphate (D-Xu5P) via a retroaldol/aldol mechanism (carbon-carbon bond cleavage analogous to a class II aldolase reaction). The protein is L-ribulose-5-phosphate 4-epimerase of Salmonella typhimurium (strain LT2 / SGSC1412 / ATCC 700720).